The chain runs to 238 residues: Probable transcriptional regulatory protein CHU_3516 (238 aa).

It belongs to the TACO1 family.

It localises to the cytoplasm. This chain is Probable transcriptional regulatory protein CHU_3516, found in Cytophaga hutchinsonii (strain ATCC 33406 / DSM 1761 / CIP 103989 / NBRC 15051 / NCIMB 9469 / D465).